We begin with the raw amino-acid sequence, 93 residues long: Large ribosomal subunit protein uL23cz/uL23cy (93 aa).

The protein belongs to the universal ribosomal protein uL23 family. In terms of assembly, part of the 50S ribosomal subunit.

It is found in the plastid. It localises to the chloroplast. Its function is as follows. Binds to 23S rRNA. The chain is Large ribosomal subunit protein uL23cz/uL23cy (rpl23-A) from Arabidopsis thaliana (Mouse-ear cress).